The following is a 255-amino-acid chain: MAVGKNKRLSKGKKGQKKRVVDPFTRKEWFDIKAPSTFENRNVGKTLVNKSTGLKSASDALKGRVVEVCLADLQGSEDHSFRKIKLRVDEVQGKNLLTNFHGMDFTTDKLRSMVRKWQTLIEANVTVKTSDDYVLRIFAIAFTRKQANQVKRHSYAQSSHIRAIRKVISEILTKEVQGSTLAQLTSKLIPEVINKEIENATKDIFPLQNIHVRKVKLLKQPKFDVGALMALHGEGSGEEKGKKVTGFKDEVLETV.

Basic residues predominate over residues Met1–Lys18. Positions Met1–Val20 are disordered. The residue at position 2 (Ala2) is an N-acetylalanine; partial. The residue at position 245 (Thr245) is a Phosphothreonine. A Glycyl lysine isopeptide (Lys-Gly) (interchain with G-Cter in ubiquitin) cross-link involves residue Lys248. A Phosphothreonine modification is found at Thr254.

The protein belongs to the eukaryotic ribosomal protein eS1 family. As to quaternary structure, component of the small ribosomal subunit. Mature ribosomes consist of a small (40S) and a large (60S) subunit. The 40S subunit contains about 33 different proteins and 1 molecule of RNA (18S). The 60S subunit contains about 49 different proteins and 3 molecules of RNA (25S, 5.8S and 5S).

It is found in the cytoplasm. The protein is Small ribosomal subunit protein eS1A of Saccharomyces cerevisiae (strain RM11-1a) (Baker's yeast).